Here is a 341-residue protein sequence, read N- to C-terminus: Major histocompatibility complex class I-related protein 1 (341 aa).

Residues 1–22 form the signal peptide; sequence MGELMAFLLPLIIVLMVKHSDS. Positions 23-109 are alpha-1; that stretch reads RTHSLRYFRL…KRLQRHYNHS (87 aa). The interval 23–201 is antigen-binding cleft; sequence RTHSLRYFRL…EYGKDTLQRT (179 aa). Residues 23–302 lie on the Extracellular side of the membrane; that stretch reads RTHSLRYFRL…QESETIPLVM (280 aa). 5-(2-oxoethylideneamino)-6-(D-ribitylamino)uracil-binding residues include arginine 31, serine 46, and lysine 65. 5-(2-oxopropylideneamino)-6-(D-ribitylamino)uracil-binding residues include arginine 31, serine 46, and lysine 65. 7-hydroxy-6-methyl-8-(1-D-ribityl)lumazine contacts are provided by arginine 31, serine 46, and lysine 65. Arginine 31 contacts 8-(9H-purin-6-yl)-2-oxa-8-azabicyclo[3.3.1]nona-3,6-diene-4,6-dicarbaldehyde. 8-(9H-purin-6-yl)-2-oxa-8-azabicyclo[3.3.1]nona-3,6-diene-4,6-dicarbaldehyde is bound by residues lysine 65 and histidine 80. Position 65 (lysine 65) interacts with 2-amino-4-oxopteridine-6-carbaldehyde. Lysine 65 provides a ligand contact to pyridoxal. Asparagine 107 carries an N-linked (GlcNAc...) asparagine glycan. Residues 110–201 form an alpha-2 region; that stretch reads GSHTYQRMIG…EYGKDTLQRT (92 aa). The 5-(2-oxoethylideneamino)-6-(D-ribitylamino)uracil site is built by arginine 116, tyrosine 174, and glutamine 175. The 5-(2-oxopropylideneamino)-6-(D-ribitylamino)uracil site is built by arginine 116, tyrosine 174, and glutamine 175. Residues arginine 116, tyrosine 174, and glutamine 175 each contribute to the 7-hydroxy-6-methyl-8-(1-D-ribityl)lumazine site. Arginine 116 contacts 8-(9H-purin-6-yl)-2-oxa-8-azabicyclo[3.3.1]nona-3,6-diene-4,6-dicarbaldehyde. Intrachain disulfides connect cysteine 120-cysteine 183 and cysteine 222-cysteine 278. The alpha-3 stretch occupies residues 202 to 293; that stretch reads EPPLVRVNRK…GVHMVLQVPQ (92 aa). Residues 203-299 form the Ig-like C1-type domain; sequence PPLVRVNRKE…QVPQESETIP (97 aa). The interval 294–302 is connecting peptide; the sequence is ESETIPLVM. Residues 303 to 323 form a helical membrane-spanning segment; that stretch reads KAVSGSIVLVIVLAGVGVLVW. Residues 324-341 are Cytoplasmic-facing; the sequence is RRRPREQNGAIYLPTPDR.

This sequence belongs to the MHC class I family. As to quaternary structure, heterotrimer that consists of MR1, B2M and a metabolite antigen. Major classes of metabolite ligands presented by MR1 include riboflavin-related antigens, pyrimidines and ribityl lumazines, nucleobase adducts and folate derivatives. Forms reversible covalent Schiff base complexes with microbial pyrimidine-based metabolite, which serves as a molecular switch triggering complete folding, stable association with B2M and translocation of the ternary complex from endoplasmic reticulum to the plasma membrane. Alternatively, forms non-Schiff base complexes with ribityl lumazines. On antigen-presenting cells, the ternary complex interacts with TCR on MR1-restricted T cells, predominantly represented by CD8-positive and CD4- and CD8-double negative MAIT cell subsets. Interacts with TAPBP and TAPBPL chaperones in the endoplasmic reticulum. TAPBP associated or not with MHC class I peptide loading complex binds ligand-free MR1 or MR1-B2M complex, providing for stable MR1 pools ready for metabolite antigen processing. TAPBPL interacts with MR1 in a ligand-independent way; this interaction may stabilize MR1 pool and facilitate ligand loading and dissociation. MR1-B2M heterodimer adopts a topology similar to classical MHC class I molecules, with alpha-1 and alpha-2 domains of MR1 forming the antigen-binding cleft composed of two alpha-helices resting on a floor of 7-stranded anti-parallel beta-pleated sheet. The ribityl moiety of pyrimidine-based antigens is recognized by Tyr-95 residue in the CDR3 alpha loop of the invariant TRAV1-2 TCR. Homodimerizes and does not associate with B2M. In terms of processing, N-glycosylated. In terms of tissue distribution, ubiquitous. Low expression is detected in peripheral blood B cells, T cells, monocytes and in bronchial epithelial cells (at protein level). Expressed in plasmablasts or plasma B cells in the lamina propria of ileum, appendix and colon (at protein level). Highly expressed on a subset of CD45-positive CD3-positive thymocytes (at protein level).

It localises to the cell membrane. The protein resides in the endoplasmic reticulum membrane. The protein localises to the golgi apparatus membrane. Its subcellular location is the early endosome membrane. It is found in the late endosome membrane. It localises to the secreted. Inhibited by pterin-based metabolites such as 6-formylpterin (6-FP, a product of folic acid photodegradation). 6-FP competitively inhibits MAIT cell activation by 5-OP-RU. Modulated by commonly prescribed anti-inflammatory drug metabolites. Inhibited by salicilates such as 3-formylsalicylic and 5-formylsalicylic acids. Activated by diclofenac and/or its hydroxy metabolites. Functionally, antigen-presenting molecule specialized in displaying microbial pyrimidine-based metabolites to alpha-beta T cell receptors (TCR) on innate-type mucosal-associated invariant T (MAIT) cells. In complex with B2M preferentially presents riboflavin-derived metabolites to semi-invariant TRAV1.2 TCRs on MAIT cells, guiding immune surveillance of the microbial metabolome at mucosal epithelial barriers. Signature pyrimidine-based microbial antigens are generated via non-enzymatic condensation of metabolite intermediates of the riboflavin pathway with by-products arising from other metabolic pathways such as glycolysis. Typical potent antigenic metabolites are 5-(2-oxoethylideneamino)-6-D-ribitylaminouracil (5-OE-RU) and 5-(2-oxopropylideneamino)-6-D-ribitylaminouracil (5-OP-RU), products of condensation of 5-amino-6-D-ribityaminouracil (5-A-RU) with glyoxal or methylglyoxal by-products, respectively. May present microbial antigens to various TRAV1-2-negative MAIT cell subsets, providing for unique recognition of diverse microbes, including pathogens that do not synthesize riboflavin. Upon antigen recognition, elicits rapid innate-type MAIT cell activation to eliminate pathogenic microbes by directly killing infected cells. During T cell development, drives thymic selection and post-thymic terminal differentiation of MAIT cells in a process dependent on commensal microflora. Acts as an immune sensor of cancer cell metabolome. May present a tumor-specific or -associated metabolite essential for cancer cell survival to a 'pan-cancer' TCR consisting of TRAV38.2-DV8*TRAJ31 alpha chain paired with a TRBV25.1*TRBJ2.3 beta chain on a non-MAIT CD8-positive T cell clone (MC.7.G5), triggering T cell-mediated killing of a wide range of cancer cell types. Allele MR1*01: Presents microbial-derived metabolite 5-OP-RU to semi-invariant TRAV1.2-TRAJ33-TRBV6.1 (A-F7) TCR on MAIT cells. Presents nucleobase carbonyl adducts generated during oxidative stress. Captures M3Ade, a nucleobase adduct composed of one adenine modified by a malondialdehyde trimer, for recognition by MR1-restricted T cell clones expressing a polyclonal TCR repertoire. Displays moderate binding affinity toward tumor-enriched pyridoxal and pyridoxal 5'-phosphate antigens. Its function is as follows. Allele MR1*04: Presents tumor-enriched metabolite pyridoxal to pan-cancer 7.G5 TCR on T cells enabling preferential recognition of cancer cells. May act as an alloantigen. The sequence is that of Major histocompatibility complex class I-related protein 1 from Homo sapiens (Human).